The primary structure comprises 71 residues: Translation initiation factor IF-1 (71 aa).

An S1-like domain is found at 1-71; sequence MSKDDLIQFT…LTKGRVIHRH (71 aa).

This sequence belongs to the IF-1 family. In terms of assembly, component of the 30S ribosomal translation pre-initiation complex which assembles on the 30S ribosome in the order IF-2 and IF-3, IF-1 and N-formylmethionyl-tRNA(fMet); mRNA recruitment can occur at any time during PIC assembly.

The protein resides in the cytoplasm. One of the essential components for the initiation of protein synthesis. Stabilizes the binding of IF-2 and IF-3 on the 30S subunit to which N-formylmethionyl-tRNA(fMet) subsequently binds. Helps modulate mRNA selection, yielding the 30S pre-initiation complex (PIC). Upon addition of the 50S ribosomal subunit IF-1, IF-2 and IF-3 are released leaving the mature 70S translation initiation complex. The protein is Translation initiation factor IF-1 of Rickettsia typhi (strain ATCC VR-144 / Wilmington).